Here is an 88-residue protein sequence, read N- to C-terminus: ATP synthase subunit c 1 (88 aa).

2 consecutive transmembrane segments (helical) span residues 4–24 (FTWVIITAGFGMAFGSLGTAI) and 53–73 (IGLAMVESLAIYVFVVSMIIL).

The protein belongs to the ATPase C chain family. In terms of assembly, F-type ATPases have 2 components, F(1) - the catalytic core - and F(0) - the membrane proton channel. F(1) has five subunits: alpha(3), beta(3), gamma(1), delta(1), epsilon(1). F(0) has three main subunits: a(1), b(2) and c(10-14). The alpha and beta chains form an alternating ring which encloses part of the gamma chain. F(1) is attached to F(0) by a central stalk formed by the gamma and epsilon chains, while a peripheral stalk is formed by the delta and b chains.

It is found in the cell inner membrane. Functionally, f(1)F(0) ATP synthase produces ATP from ADP in the presence of a proton or sodium gradient. F-type ATPases consist of two structural domains, F(1) containing the extramembraneous catalytic core and F(0) containing the membrane proton channel, linked together by a central stalk and a peripheral stalk. During catalysis, ATP synthesis in the catalytic domain of F(1) is coupled via a rotary mechanism of the central stalk subunits to proton translocation. Key component of the F(0) channel; it plays a direct role in translocation across the membrane. A homomeric c-ring of between 10-14 subunits forms the central stalk rotor element with the F(1) delta and epsilon subunits. The chain is ATP synthase subunit c 1 from Syntrophotalea carbinolica (strain DSM 2380 / NBRC 103641 / GraBd1) (Pelobacter carbinolicus).